The sequence spans 247 residues: Probable dihydroorotate dehydrogenase B (NAD(+)), electron transfer subunit (247 aa).

Residues 1-87 (MLRRVMIKET…RGPYGNGFKS (87 aa)) form the FAD-binding FR-type domain. Residues C200, C205, C208, and C216 each contribute to the [2Fe-2S] cluster site.

It belongs to the PyrK family. Heterotetramer of 2 PyrK and 2 PyrD type B subunits. Requires [2Fe-2S] cluster as cofactor. The cofactor is FAD.

It participates in pyrimidine metabolism; UMP biosynthesis via de novo pathway; orotate from (S)-dihydroorotate (NAD(+) route): step 1/1. Functionally, responsible for channeling the electrons from the oxidation of dihydroorotate from the FMN redox center in the PyrD type B subunit to the ultimate electron acceptor NAD(+). The sequence is that of Probable dihydroorotate dehydrogenase B (NAD(+)), electron transfer subunit from Pyrococcus abyssi (strain GE5 / Orsay).